The following is a 282-amino-acid chain: uncharacterized protein (282 aa).

This is an uncharacterized protein from Escherichia coli (strain K12).